A 287-amino-acid polypeptide reads, in one-letter code: Bifunctional protein FolD (287 aa).

NADP(+)-binding positions include Gly167 to Ser169 and Thr192.

This sequence belongs to the tetrahydrofolate dehydrogenase/cyclohydrolase family. Homodimer.

It catalyses the reaction (6R)-5,10-methylene-5,6,7,8-tetrahydrofolate + NADP(+) = (6R)-5,10-methenyltetrahydrofolate + NADPH. The enzyme catalyses (6R)-5,10-methenyltetrahydrofolate + H2O = (6R)-10-formyltetrahydrofolate + H(+). It participates in one-carbon metabolism; tetrahydrofolate interconversion. Catalyzes the oxidation of 5,10-methylenetetrahydrofolate to 5,10-methenyltetrahydrofolate and then the hydrolysis of 5,10-methenyltetrahydrofolate to 10-formyltetrahydrofolate. This Sorangium cellulosum (strain So ce56) (Polyangium cellulosum (strain So ce56)) protein is Bifunctional protein FolD.